The chain runs to 334 residues: H-2 class I histocompatibility antigen, Q7 alpha chain (334 aa).

The signal sequence occupies residues M1–A21. The tract at residues G22–G111 is alpha-1. Topologically, residues G22–T310 are extracellular. A glycan (N-linked (GlcNAc...) asparagine) is linked at N107. The interval G112 to T203 is alpha-2. 2 disulfides stabilise this stretch: C122-C185 and C224-C280. The segment at D204–W295 is alpha-3. Residues P206–R294 enclose the Ig-like C1-type domain. Residue N277 is glycosylated (N-linked (GlcNAc...) asparagine). Residues G296–T310 are connecting peptide. The helical transmembrane segment at I311 to N332 threads the bilayer.

The protein belongs to the MHC class I family. Heterodimer of an alpha chain and a beta chain (beta-2-microglobulin).

The protein localises to the membrane. Functionally, involved in the presentation of foreign antigens to the immune system. This chain is H-2 class I histocompatibility antigen, Q7 alpha chain (H2-Q7), found in Mus musculus (Mouse).